The primary structure comprises 228 residues: R-spondin-4 (228 aa).

An N-terminal signal peptide occupies residues 1 to 19 (MRAPLCLLLLLAHAVDMLA). Asparagine 34 carries N-linked (GlcNAc...) asparagine glycosylation. 11 disulfide bridges follow: cysteine 35-cysteine 41, cysteine 38-cysteine 47, cysteine 50-cysteine 69, cysteine 73-cysteine 88, cysteine 91-cysteine 98, cysteine 95-cysteine 104, cysteine 107-cysteine 118, cysteine 122-cysteine 135, cysteine 139-cysteine 181, cysteine 150-cysteine 157, and cysteine 190-cysteine 196. The FU repeat unit spans residues 85–128 (ANRCKKCGATCESCFSQDFCIRCKRRFHLYKGKCLPSCPPGTLT). Residues 138–197 (ECEPSPWGSWSPCIHNGKTCGSGWGLETRVREAGPAKQEETASCRVLSESRKCPIKRLCP) enclose the TSP type-1 domain. The interval 193 to 228 (KRLCPGERNPRQKNRKDRRQRKDRKLERRPHQRGSQ) is disordered. Basic residues predominate over residues 203-228 (RQKNRKDRRQRKDRKLERRPHQRGSQ).

It belongs to the R-spondin family. Binds heparin. Interacts with LGR4, LGR5 and LGR6.

It localises to the secreted. Activator of the canonical Wnt signaling pathway by acting as a ligand for LGR4-6 receptors. Upon binding to LGR4-6 (LGR4, LGR5 or LGR6), LGR4-6 associate with phosphorylated LRP6 and frizzled receptors that are activated by extracellular Wnt receptors, triggering the canonical Wnt signaling pathway to increase expression of target genes. Also regulates the canonical Wnt/beta-catenin-dependent pathway and non-canonical Wnt signaling by acting as an inhibitor of ZNRF3, an important regulator of the Wnt signaling pathway. The chain is R-spondin-4 (Rspo4) from Mus musculus (Mouse).